Consider the following 102-residue polypeptide: NADH-quinone oxidoreductase subunit K 2 (102 aa).

A run of 3 helical transmembrane segments spans residues M1 to V21, I30 to G50, and L65 to L85.

This sequence belongs to the complex I subunit 4L family. NDH-1 is composed of 14 different subunits. Subunits NuoA, H, J, K, L, M, N constitute the membrane sector of the complex.

The protein localises to the cell inner membrane. It carries out the reaction a quinone + NADH + 5 H(+)(in) = a quinol + NAD(+) + 4 H(+)(out). In terms of biological role, NDH-1 shuttles electrons from NADH, via FMN and iron-sulfur (Fe-S) centers, to quinones in the respiratory chain. The immediate electron acceptor for the enzyme in this species is believed to be ubiquinone. Couples the redox reaction to proton translocation (for every two electrons transferred, four hydrogen ions are translocated across the cytoplasmic membrane), and thus conserves the redox energy in a proton gradient. This chain is NADH-quinone oxidoreductase subunit K 2, found in Geotalea daltonii (strain DSM 22248 / JCM 15807 / FRC-32) (Geobacter daltonii).